The chain runs to 1267 residues: DNA-directed RNA polymerase subunit beta'' (1267 aa).

Zn(2+)-binding residues include Cys-222, Cys-290, Cys-297, and Cys-300.

It belongs to the RNA polymerase beta' chain family. RpoC2 subfamily. In terms of assembly, in plastids the minimal PEP RNA polymerase catalytic core is composed of four subunits: alpha, beta, beta', and beta''. When a (nuclear-encoded) sigma factor is associated with the core the holoenzyme is formed, which can initiate transcription. Zn(2+) serves as cofactor.

It localises to the plastid. The protein resides in the chloroplast. The enzyme catalyses RNA(n) + a ribonucleoside 5'-triphosphate = RNA(n+1) + diphosphate. Its function is as follows. DNA-dependent RNA polymerase catalyzes the transcription of DNA into RNA using the four ribonucleoside triphosphates as substrates. This Emiliania huxleyi (Coccolithophore) protein is DNA-directed RNA polymerase subunit beta''.